The sequence spans 174 residues: MDTRSYPSPPDRLSVFAESAHLPLSRPFYLDPMVTVHLCPETPVPASYTDELPLLPFSSDTLIMNNYGDPYPFPFPMPYTNYRRCDYTYGPAFIRKRNERERQRVKCVNEGYARLRRHLPEDYLEKRLSKVETLRAAIKYISYLQSLLYPDESETKKNPRTASCGSLDPALRVI.

Residues 92 to 105 (AFIRKRNERERQRV) are basic motif. One can recognise a bHLH domain in the interval 92 to 144 (AFIRKRNERERQRVKCVNEGYARLRRHLPEDYLEKRLSKVETLRAAIKYISYL). Positions 106–144 (KCVNEGYARLRRHLPEDYLEKRLSKVETLRAAIKYISYL) are helix-loop-helix motif. Positions 153–174 (SETKKNPRTASCGSLDPALRVI) are disordered.

As to quaternary structure, efficient DNA binding requires dimerization with another bHLH protein. Expressed in the salivary duct cells. Also expressed at lower levels in testis and epididymis. Expressed in the olfactory epithelium (OE), in a subset of apical microvillar cells.

It is found in the nucleus. In terms of biological role, transcriptional repressor. Inhibits myogenesis. Plays a role in progenitor cells which differentiate into ductal and acinar, but not myoepithelial, cell lineages in the salivary glands. Involved in the functions of the microvillar cells and Bowman's glands and probably, in a non-cell-autonomous manner, in the development or regeneration of a complete olfactory epithelium (OE). The polypeptide is Achaete-scute homolog 3 (Ascl3) (Mus musculus (Mouse)).